Reading from the N-terminus, the 74-residue chain is MSETKTFEDKLQQLEGIVSELEKGDRPLETALADFQTGVGLVKELQGTLKHAEETLAKVMSDDDKLTDLELTND.

This sequence belongs to the XseB family. In terms of assembly, heterooligomer composed of large and small subunits.

It localises to the cytoplasm. It carries out the reaction Exonucleolytic cleavage in either 5'- to 3'- or 3'- to 5'-direction to yield nucleoside 5'-phosphates.. In terms of biological role, bidirectionally degrades single-stranded DNA into large acid-insoluble oligonucleotides, which are then degraded further into small acid-soluble oligonucleotides. The chain is Exodeoxyribonuclease 7 small subunit from Leuconostoc citreum (strain KM20).